Consider the following 116-residue polypeptide: Carbohydrate-binding protein AQN-3 (116 aa).

C9 and C30 are disulfide-bonded. The region spanning 9–110 (CGGFLKNYSG…SSFNVYFYGI (102 aa)) is the CUB domain. An N-linked (GlcNAc...) asparagine glycan is attached at N50. A disulfide bridge links C53 with C74. H85 is subject to Methylhistidine.

The protein belongs to the spermadhesin family. Post-translationally, the residue at position 85 was identified as a methylhistidine by mass spectrometry.

The protein localises to the secreted. AQN proteins mediate the binding of boar spermatozoa to component(s) of the egg's zona pellucida by a carbohydrate-binding mechanism. AQN proteins are secretory components of the male accessory glands being coated to the sperm surface at the time of ejaculation. They possess as well heparin-, serine-protease-inhibitor-binding capability. The sequence is that of Carbohydrate-binding protein AQN-3 from Sus scrofa (Pig).